The chain runs to 403 residues: NADH-quinone oxidoreductase subunit D (403 aa).

The protein belongs to the complex I 49 kDa subunit family. NDH-1 is composed of 14 different subunits. Subunits NuoB, C, D, E, F, and G constitute the peripheral sector of the complex.

The protein resides in the cell membrane. The catalysed reaction is a quinone + NADH + 5 H(+)(in) = a quinol + NAD(+) + 4 H(+)(out). Its function is as follows. NDH-1 shuttles electrons from NADH, via FMN and iron-sulfur (Fe-S) centers, to quinones in the respiratory chain. The immediate electron acceptor for the enzyme in this species is believed to be a menaquinone. Couples the redox reaction to proton translocation (for every two electrons transferred, four hydrogen ions are translocated across the cytoplasmic membrane), and thus conserves the redox energy in a proton gradient. The polypeptide is NADH-quinone oxidoreductase subunit D (Amoebophilus asiaticus (strain 5a2)).